The primary structure comprises 387 residues: Protein PHYTOCHROME KINASE SUBSTRATE 3 (387 aa).

Disordered stretches follow at residues 1 to 21 (MDAE…PQLL), 74 to 128 (HEKE…CNSQ), and 242 to 271 (LSTK…ASVA). Residues 12 to 21 (QISSYKPQLL) show a composition bias toward polar residues. Basic and acidic residues predominate over residues 74–83 (HEKENTHDHP). Positions 114–128 (HGTPSVRSESSCNSQ) are enriched in polar residues. Positions 242–261 (LSTKNNNHNNNGNNSSMSSN) are enriched in low complexity.

Belongs to the PKS family.

Its function is as follows. Probably involved in the phytochrome signaling pathway. This Arabidopsis thaliana (Mouse-ear cress) protein is Protein PHYTOCHROME KINASE SUBSTRATE 3 (PKS3).